Here is a 379-residue protein sequence, read N- to C-terminus: MDSRPTVVEIDLAALRHNFSLVQKRVPEGCGLLAVVKADAYGHGFQYVSEELEKLGVDAFAVAFLAEGVQLRMSGITRPVLILGGIYPGEERRLIGLNISTALFSLEQAAALDQAALEIKCYRKAHIHLKVDTGMGRLGVPYHEVPEFLAKLKQFKNLELEGIFSHFASADELDPEGIAFTRLQAERFNAAVEEARRQGYAPSYVHVANSAAILAQDLPYCNLARPGIILYGALPSGDFEGQVPSQPVMRLKSRVAMLKWVEPGTSISYGRRYVATERALIASVPVGYADGYCRSLTNKGEALIRGQRAKVAGTVCMDWIMLDVTNVKGVAVGDDVTLLGPDPMGDCISAEEMAEKAGTIPYEVLCGIATRRVRRVYLG.

The active-site Proton acceptor; specific for D-alanine is lysine 37. Position 37 is an N6-(pyridoxal phosphate)lysine (lysine 37). Arginine 137 serves as a coordination point for substrate. Tyrosine 269 (proton acceptor; specific for L-alanine) is an active-site residue. Methionine 317 provides a ligand contact to substrate.

Belongs to the alanine racemase family. Pyridoxal 5'-phosphate is required as a cofactor.

The enzyme catalyses L-alanine = D-alanine. It participates in amino-acid biosynthesis; D-alanine biosynthesis; D-alanine from L-alanine: step 1/1. Its function is as follows. Catalyzes the interconversion of L-alanine and D-alanine. May also act on other amino acids. The protein is Alanine racemase (alr) of Geobacter sp. (strain M21).